A 444-amino-acid chain; its full sequence is ATP-dependent protease ATPase subunit HslU (444 aa).

ATP contacts are provided by residues Ile-20 and 62 to 67 (GVGKTE). The disordered stretch occupies residues 130–158 (EDRILDALVPPPRGASGEPERGEDNSARQ). Residues Asp-257, Glu-322, and Arg-394 each contribute to the ATP site.

It belongs to the ClpX chaperone family. HslU subfamily. As to quaternary structure, a double ring-shaped homohexamer of HslV is capped on each side by a ring-shaped HslU homohexamer. The assembly of the HslU/HslV complex is dependent on binding of ATP.

The protein localises to the cytoplasm. In terms of biological role, ATPase subunit of a proteasome-like degradation complex; this subunit has chaperone activity. The binding of ATP and its subsequent hydrolysis by HslU are essential for unfolding of protein substrates subsequently hydrolyzed by HslV. HslU recognizes the N-terminal part of its protein substrates and unfolds these before they are guided to HslV for hydrolysis. This chain is ATP-dependent protease ATPase subunit HslU, found in Bordetella pertussis (strain Tohama I / ATCC BAA-589 / NCTC 13251).